The chain runs to 202 residues: Glycerol-3-phosphate acyltransferase (202 aa).

5 consecutive transmembrane segments (helical) span residues 3–23 (ILLA…VVVS), 51–71 (KAAI…VWLV), 74–94 (FGIG…LGHL), 116–136 (AVHP…AFFF), and 140–160 (SLAA…LFGT).

Belongs to the PlsY family. As to quaternary structure, probably interacts with PlsX.

It localises to the cell inner membrane. The catalysed reaction is an acyl phosphate + sn-glycerol 3-phosphate = a 1-acyl-sn-glycero-3-phosphate + phosphate. Its pathway is lipid metabolism; phospholipid metabolism. Catalyzes the transfer of an acyl group from acyl-phosphate (acyl-PO(4)) to glycerol-3-phosphate (G3P) to form lysophosphatidic acid (LPA). This enzyme utilizes acyl-phosphate as fatty acyl donor, but not acyl-CoA or acyl-ACP. In Burkholderia thailandensis (strain ATCC 700388 / DSM 13276 / CCUG 48851 / CIP 106301 / E264), this protein is Glycerol-3-phosphate acyltransferase.